A 35-amino-acid polypeptide reads, in one-letter code: Photosystem II reaction center protein T (35 aa).

Residues Ala-3–Phe-23 traverse the membrane as a helical segment.

The protein belongs to the PsbT family. As to quaternary structure, PSII is composed of 1 copy each of membrane proteins PsbA, PsbB, PsbC, PsbD, PsbE, PsbF, PsbH, PsbI, PsbJ, PsbK, PsbL, PsbM, PsbT, PsbY, PsbZ, Psb30/Ycf12, at least 3 peripheral proteins of the oxygen-evolving complex and a large number of cofactors. It forms dimeric complexes.

It localises to the plastid. Its subcellular location is the chloroplast thylakoid membrane. In terms of biological role, found at the monomer-monomer interface of the photosystem II (PS II) dimer, plays a role in assembly and dimerization of PSII. PSII is a light-driven water plastoquinone oxidoreductase, using light energy to abstract electrons from H(2)O, generating a proton gradient subsequently used for ATP formation. The sequence is that of Photosystem II reaction center protein T from Aristolochia macrophylla (Dutchman's pipe vine).